We begin with the raw amino-acid sequence, 1247 residues long: Catenin delta-2 (1247 aa).

Disordered stretches follow at residues 1–50 (MFAR…TTSA), 134–238 (SGIL…SAFH), and 256–309 (LPAP…KSYS). S7 carries the post-translational modification Phosphoserine. Residues 22 to 50 (PSASEKNSSLSPGLNTSNGDGSETETTSA) are compositionally biased toward polar residues. Positions 49–84 (SAILASVKEQELQFERLTRELEAERQIVASQLERCK) form a coiled coil. Residues 149–160 (SLLSQSALQLNS) are compositionally biased toward low complexity. The span at 172-207 (YHSNQTLALGDTAPSQLPARSTQARAAGQSFSQGTT) shows a compositional bias: polar residues. The residue at position 209 (R209) is an Omega-N-methylarginine. Residues 218-228 (PAPPPPPPREP) are compositionally biased toward pro residues. R261 is modified (omega-N-methylarginine). A phosphoserine mark is found at S264 and S273. A compositionally biased stretch (polar residues) spans 265–276 (PLTTTQGGSPTK). Omega-N-methylarginine is present on residues R279 and R293. The segment covering 296 to 309 (SPKQSPSRLAKSYS) has biased composition (polar residues). S324, S357, S412, and S458 each carry phosphoserine. The stretch at 391 to 433 (GSRASYSSQHGHLAPELRALQSPEHHIDPIYEDRVYQKPPMRS) is one ARM 1 repeat. The disordered stretch occupies residues 429–480 (PPMRSLSQSQGDPLPPAHTGTFRTSTAPSSPGVDSVPLQRTGSQHGPQNAAA). Residues 466–475 (LQRTGSQHGP) are compositionally biased toward polar residues. At S511 the chain carries Phosphoserine. Y513 carries the post-translational modification Phosphotyrosine. The tract at residues 514–533 (SKSGPALPPEGTLARSPSID) is disordered. ARM repeat units lie at residues 537 to 576 (KDPR…HLCF), 579 to 618 (NKIK…NLVY), 623 to 663 (DDNK…NLSS), 679 to 721 (LTNA…NVSS), 725 to 770 (EARR…NLSY), 832 to 872 (PKGI…NLAA), 904 to 943 (VYIR…NMAL), and 997 to 1040 (MENA…SMWQ). 2 disordered regions span residues 1064 to 1131 (TIER…HTSR) and 1152 to 1176 (APAE…RKDY). Residues 1072–1081 (PYSSSRTPSI) show a composition bias toward polar residues. Phosphoserine occurs at positions 1087 and 1098. The segment covering 1087–1100 (SPNNRSASAPASPR) has biased composition (low complexity). Basic and acidic residues predominate over residues 1103 to 1112 (ISLKERKTDY).

Belongs to the beta-catenin family. In terms of assembly, binds to E-cadherin at a juxtamembrane site within the cytoplasmic domain. Binds to PSEN1. Interacts with PDZD2. Interacts (via the extreme C-terminus) with FRMPD2 (via the PDZ 2 domain). Interacts with ZBTB33. Interacts with ARHGEF28. Interacts with CDK5. Interacts with CTNNB1. Interacts with GSK3A and GSK3B. Interacts with DNM2. Interacts with CCDC85B. Post-translationally, O-glycosylated. In terms of processing, phosphorylated by CDK5. Phosphorylated by GSK3B. In terms of tissue distribution, expressed in neurons and glial cells. Isoform 2 was found to be the most predominant isoform in various brain regions. Expressed at neuromuscular junctions.

Its subcellular location is the nucleus. It is found in the cell junction. The protein resides in the adherens junction. It localises to the cell projection. The protein localises to the dendrite. Its subcellular location is the perikaryon. Functionally, has a critical role in neuronal development, particularly in the formation and/or maintenance of dendritic spines and synapses. Involved in the regulation of canonical Wnt signaling. It probably acts on beta-catenin turnover, facilitating beta-catenin interaction with GSK3B, phosphorylation, ubiquitination and degradation. May be involved in neuronal cell adhesion and tissue morphogenesis and integrity by regulating adhesion molecules. Functions as a transcriptional activator when bound to ZBTB33. This is Catenin delta-2 (Ctnnd2) from Mus musculus (Mouse).